The sequence spans 389 residues: UDP-N-acetylglucosamine--N-acetylmuramyl-(pentapeptide) pyrophosphoryl-undecaprenol N-acetylglucosamine transferase (389 aa).

UDP-N-acetyl-alpha-D-glucosamine contacts are provided by residues T17–G19, N137, R179, S213, and Q308.

It belongs to the glycosyltransferase 28 family. MurG subfamily.

The protein localises to the cell membrane. It catalyses the reaction di-trans,octa-cis-undecaprenyl diphospho-N-acetyl-alpha-D-muramoyl-L-alanyl-D-glutamyl-meso-2,6-diaminopimeloyl-D-alanyl-D-alanine + UDP-N-acetyl-alpha-D-glucosamine = di-trans,octa-cis-undecaprenyl diphospho-[N-acetyl-alpha-D-glucosaminyl-(1-&gt;4)]-N-acetyl-alpha-D-muramoyl-L-alanyl-D-glutamyl-meso-2,6-diaminopimeloyl-D-alanyl-D-alanine + UDP + H(+). Its pathway is cell wall biogenesis; peptidoglycan biosynthesis. Functionally, cell wall formation. Catalyzes the transfer of a GlcNAc subunit on undecaprenyl-pyrophosphoryl-MurNAc-pentapeptide (lipid intermediate I) to form undecaprenyl-pyrophosphoryl-MurNAc-(pentapeptide)GlcNAc (lipid intermediate II). The chain is UDP-N-acetylglucosamine--N-acetylmuramyl-(pentapeptide) pyrophosphoryl-undecaprenol N-acetylglucosamine transferase from Rhodococcus erythropolis (strain PR4 / NBRC 100887).